The chain runs to 741 residues: MAPQKHGGGGGGGSGPSAGSGGGGFGGSAAAVAAAASGGKSGGGGCGGGGSYSASSSSAAAAAAAAGAAVLPVKKPKMEHVQADHELFLQAFEKPTQIYRFLRTRNLIAPIFLHRTLTYMSHRNSRTSIKRKTFKVDDMLSKVEKMKGEQESHSLSAHLQLTFTGFFHKNDKPSQNSENEQNSVTLEVLLVKVCHKKRKDVSCPIRQVPTGKKQVPLNPDLNQTKPGNFPSLAVSSNEFEPSNSHMVKSYSLLFRVTRPGRREFNGMINGETNENIDVSEELPARRKRNREDGEKTFVAQMTVFDKNRRLQLLDGEYEVAMQEMEECPISKKRATWETILDGKRLPPFETFSQGPTLQFTLRWTGETNDKSTAPVAKPLATRNSESLHQENKPGSVKPAQTIAVKETLTTELQTRKEKDNSNESRQKLRIFYQFLYNNNTRQQTEARDDLHCPWCTLNCRKLYSLLKHLKLCHSRFIFNYVYHPKGARIDVSINECYDGSYAGNPQDIHRQPGFAFSRNGPVKRTPITHILVCRPKRTKASMSEFLESEDGEVEQQRTYSSGHNRLYFHSDTCLPLRPQEMEVDSEDEKDPEWLREKTITQIEEFSDVNEGEKEVMKLWNLHVMKHGFIADNQMNHACMLFVENYGQKIIKKNLCRNFMLHLVSMHDFNLISIMSIDKAVTKLREMQQKLEKGESATPSNEEIAEEQNGTANGFSETNSKEKALETDGVSGVPKQSKKQKL.

The tract at residues 1 to 21 is disordered; sequence MAPQKHGGGGGGGSGPSAGSG. Residue Ser-20 is modified to Phosphoserine. Residues Lys-74 and Lys-75 each participate in a glycyl lysine isopeptide (Lys-Gly) (interchain with G-Cter in SUMO) cross-link. A Glycyl lysine isopeptide (Lys-Gly) (interchain with G-Cter in SUMO); alternate cross-link involves residue Lys-77. Lys-77 is covalently cross-linked (Glycyl lysine isopeptide (Lys-Gly) (interchain with G-Cter in SUMO2); alternate). Residues 81-108 are interaction with JARID2 and EPOP; the sequence is VQADHELFLQAFEKPTQIYRFLRTRNLI. Residues 148–365 are interaction with AEBP2 and PHF19; sequence GEQESHSLSA…TLQFTLRWTG (218 aa). Residues Lys-225 and Lys-392 each participate in a glycyl lysine isopeptide (Lys-Gly) (interchain with G-Cter in SUMO2) cross-link. A C2H2-type zinc finger spans residues 450–473; sequence LHCPWCTLNCRKLYSLLKHLKLCH. A phosphoserine mark is found at Ser-543, Ser-548, and Ser-585. The VEFS-box stretch occupies residues 565–641; the sequence is RLYFHSDTCL…NQMNHACMLF (77 aa). The tract at residues 689 to 741 is disordered; the sequence is KLEKGESATPSNEEIAEEQNGTANGFSETNSKEKALETDGVSGVPKQSKKQKL. Residues 707–717 are compositionally biased toward polar residues; the sequence is QNGTANGFSET.

It belongs to the VEFS (VRN2-EMF2-FIS2-SU(Z)12) family. As to quaternary structure, component of the PRC2 complex, which consists of the core subunits EED, EZH1 or EZH2, SUZ12, and RBBP4, and various combinations of accessory subunits including AEBP2, JARID2, PHF19, MTF2 and EPOP. Within the complex, interacts (via C2H2 zinc finger domain) with JARID2 and EPOP; JARID2 and EPOP compete for SUZ12 binding. Also interacts with AEBP2 and PHF19. Forms a monomeric PRC2.2 (class 2) complex consisting of at least SUZ12, RBBP4, AEBP2 and JARID2. Forms a dimeric PRC2.1 (class 1, PRC-PCL) complex consisting of at least SUZ12, RBBP4, and PHF19 or MTF2; PHF19 and MTF2 stabilize the dimeric structure which enhances PRC2 interaction with chromatin. The minimum components required for methyltransferase activity of the PRC2/EZH2 complex are EED, EZH2 and SUZ12. The PRC2 complex may also interact with DNMT1, DNMT3A, DNMT3B and PHF1 via the EZH2 subunit and with SIRT1 via the SUZ12 subunit. Interacts with WDR77. Interacts with histone H1. Interacts with CDYL. Interacts with BMAL1. Interacts with EZHIP (via C-terminal region). Interacts with ARMC12. Interacts with DDX18; this interaction inhibits the PRC2 complex. In terms of processing, sumoylated, probably by PIAS2. As to expression, expressed in embryonic stem cells.

Its subcellular location is the nucleus. It localises to the chromosome. Polycomb group (PcG) protein. Component of the PRC2/EED-EZH2 complex, which methylates 'Lys-9' (H3K9me) and 'Lys-27' (H3K27me) of histone H3, leading to transcriptional repression of the affected target gene. The PRC2/EED-EZH2 complex may also serve as a recruiting platform for DNA methyltransferases, thereby linking two epigenetic repression systems. Genes repressed by the PRC2/EED-EZH2 complex include HOXA7, HOXB6 and HOXC8. The chain is Polycomb protein Suz12 (Suz12) from Mus musculus (Mouse).